Here is a 422-residue protein sequence, read N- to C-terminus: Serine hydroxymethyltransferase (422 aa).

121–123 (GHI) is a binding site for (6S)-5,6,7,8-tetrahydrofolate. Position 227 is an N6-(pyridoxal phosphate)lysine (lysine 227). Glutamate 245 is a (6S)-5,6,7,8-tetrahydrofolate binding site.

It belongs to the SHMT family. Homodimer. The cofactor is pyridoxal 5'-phosphate.

The protein resides in the cytoplasm. The catalysed reaction is 5,10-methylenetetrahydromethanopterin + glycine + H2O = 5,6,7,8-tetrahydromethanopterin + L-serine. It functions in the pathway amino-acid biosynthesis; glycine biosynthesis; glycine from L-serine: step 1/1. Catalyzes the reversible interconversion of serine and glycine with tetrahydromethanopterin (H4MPT) serving as the one-carbon carrier. Also exhibits a pteridine-independent aldolase activity toward beta-hydroxyamino acids, producing glycine and aldehydes, via a retro-aldol mechanism. The sequence is that of Serine hydroxymethyltransferase from Methanobrevibacter smithii (strain ATCC 35061 / DSM 861 / OCM 144 / PS).